Here is a 510-residue protein sequence, read N- to C-terminus: ATP synthase subunit alpha (510 aa).

An ATP-binding site is contributed by glycine 171–threonine 178.

Belongs to the ATPase alpha/beta chains family. As to quaternary structure, F-type ATPases have 2 components, CF(1) - the catalytic core - and CF(0) - the membrane proton channel. CF(1) has five subunits: alpha(3), beta(3), gamma(1), delta(1), epsilon(1). CF(0) has three main subunits: a(1), b(2) and c(9-12). The alpha and beta chains form an alternating ring which encloses part of the gamma chain. CF(1) is attached to CF(0) by a central stalk formed by the gamma and epsilon chains, while a peripheral stalk is formed by the delta and b chains.

Its subcellular location is the cell inner membrane. It carries out the reaction ATP + H2O + 4 H(+)(in) = ADP + phosphate + 5 H(+)(out). In terms of biological role, produces ATP from ADP in the presence of a proton gradient across the membrane. The alpha chain is a regulatory subunit. This chain is ATP synthase subunit alpha, found in Phenylobacterium zucineum (strain HLK1).